A 159-amino-acid chain; its full sequence is CASP-like protein 5C1 (159 aa).

The Cytoplasmic segment spans residues M1 to R6. The helical transmembrane segment at S7–F29 threads the bilayer. At S30–A48 the chain is on the extracellular side. A helical transmembrane segment spans residues F49–I69. Over D70–C94 the chain is Cytoplasmic. Residues A95 to L117 traverse the membrane as a helical segment. At H118–A134 the chain is on the extracellular side. The chain crosses the membrane as a helical span at residues M135–V155. At A156–W159 the chain is on the cytoplasmic side.

The protein belongs to the Casparian strip membrane proteins (CASP) family. Homodimer and heterodimers.

It localises to the cell membrane. The sequence is that of CASP-like protein 5C1 from Zea mays (Maize).